The primary structure comprises 81 residues: Sulfur carrier protein TusA (81 aa).

Cysteine 20 functions as the Cysteine persulfide intermediate in the catalytic mechanism.

The protein belongs to the sulfur carrier protein TusA family.

Its subcellular location is the cytoplasm. In terms of biological role, sulfur carrier protein which probably makes part of a sulfur-relay system. This Colwellia psychrerythraea (strain 34H / ATCC BAA-681) (Vibrio psychroerythus) protein is Sulfur carrier protein TusA.